Consider the following 200-residue polypeptide: 3-isopropylmalate dehydratase small subunit (200 aa).

This sequence belongs to the LeuD family. LeuD type 1 subfamily. In terms of assembly, heterodimer of LeuC and LeuD.

The enzyme catalyses (2R,3S)-3-isopropylmalate = (2S)-2-isopropylmalate. Its pathway is amino-acid biosynthesis; L-leucine biosynthesis; L-leucine from 3-methyl-2-oxobutanoate: step 2/4. Catalyzes the isomerization between 2-isopropylmalate and 3-isopropylmalate, via the formation of 2-isopropylmaleate. The chain is 3-isopropylmalate dehydratase small subunit from Actinobacillus pleuropneumoniae serotype 5b (strain L20).